The sequence spans 216 residues: MTKKYSLGFVGRKAGMSRIFTEDGRSVPVTLIEATPNRIAQIKTVEVDGYSAVQITVGARRAALVNKPAAGHFAKAKVEAGRGLWEFRVEDAHLGDFAVGGEIKADIFEVGQKVDVQGVTKGKGFQGTIKRYNFRMGDATHGNSLSHRAPGSLGQRQTPGRVFPGKKMSGHMGAVQQSTQNLEVVKVDVERGLIAIHGAVPGAAGGDVIVRPASKA.

Position 157 is an N5-methylglutamine (Gln157).

It belongs to the universal ribosomal protein uL3 family. In terms of assembly, part of the 50S ribosomal subunit. Forms a cluster with proteins L14 and L19. Methylated by PrmB.

One of the primary rRNA binding proteins, it binds directly near the 3'-end of the 23S rRNA, where it nucleates assembly of the 50S subunit. The polypeptide is Large ribosomal subunit protein uL3 (Xanthomonas oryzae pv. oryzae (strain MAFF 311018)).